The chain runs to 437 residues: ATP-dependent RNA helicase SUB2 (437 aa).

A compositionally biased stretch (acidic residues) spans 1–19; the sequence is MSHEAEEDLLEYSDNEQEV. The interval 1–45 is disordered; it reads MSHEAEEDLLEYSDNEQEVQVDNKATEVNAEGNGESQAKDSDKKG. Positions 53 to 81 match the Q motif motif; the sequence is TGFKDFLLKPELSRAIIDCGFEHPSEVQQ. In terms of domain architecture, Helicase ATP-binding spans 84 to 259; that stretch reads IPQSIHGTDV…RRFLQNPLEI (176 aa). An ATP-binding site is contributed by 97-104; the sequence is AKSGLGKT. A DECD box motif is present at residues 206–209; that stretch reads DECD. In terms of domain architecture, Helicase C-terminal spans 287–432; it reads KLAQLLDDLE…EFPEEGVDPS (146 aa).

This sequence belongs to the DEAD box helicase family. DECD subfamily.

It is found in the nucleus. The enzyme catalyses ATP + H2O = ADP + phosphate + H(+). In terms of biological role, ATP-binding RNA helicase involved in transcription elongation and required for the export of mRNA out of the nucleus. SUB2 also plays a role in pre-mRNA splicing and spliceosome assembly. May be involved in rDNA and telomeric silencing, and maintenance of genome integrity. The polypeptide is ATP-dependent RNA helicase SUB2 (SUB2) (Kluyveromyces lactis (strain ATCC 8585 / CBS 2359 / DSM 70799 / NBRC 1267 / NRRL Y-1140 / WM37) (Yeast)).